The sequence spans 393 residues: Branched-chain-amino-acid aminotransferase, mitochondrial (393 aa).

A mitochondrion-targeting transit peptide spans 1-16 (MLQRHSLKLGKFSIRT). Lys219 carries the N6-(pyridoxal phosphate)lysine modification. Thr315 bears the Phosphothreonine mark.

The protein belongs to the class-IV pyridoxal-phosphate-dependent aminotransferase family. Pyridoxal 5'-phosphate is required as a cofactor.

It localises to the mitochondrion matrix. It catalyses the reaction L-leucine + 2-oxoglutarate = 4-methyl-2-oxopentanoate + L-glutamate. The catalysed reaction is L-isoleucine + 2-oxoglutarate = (S)-3-methyl-2-oxopentanoate + L-glutamate. It carries out the reaction L-valine + 2-oxoglutarate = 3-methyl-2-oxobutanoate + L-glutamate. The enzyme catalyses a 2-oxocarboxylate + L-methionine = 4-methylsulfanyl-2-oxobutanoate + an L-alpha-amino acid. It functions in the pathway amino-acid biosynthesis; L-isoleucine biosynthesis; L-isoleucine from 2-oxobutanoate: step 4/4. It participates in amino-acid biosynthesis; L-leucine biosynthesis; L-leucine from 3-methyl-2-oxobutanoate: step 4/4. The protein operates within amino-acid biosynthesis; L-valine biosynthesis; L-valine from pyruvate: step 4/4. Its pathway is amino-acid biosynthesis; L-methionine biosynthesis via salvage pathway; L-methionine from S-methyl-5-thio-alpha-D-ribose 1-phosphate: step 6/6. Mitochondrial isozyme of branched-chain-amino-acid aminotransferase, involved in the biosynthesis of the branched chain amino acids (BCAAs) leucine, isoleucine, and valine. Catalyzes the formation of methionine from 2-keto-4-methylthiobutyrate (KMTB) in the methionine salvage pathway primarily using BCAAs (leucine, isoleucine, and valine) as the amino donors. Appears to be involved in the regulation of the cell cycle, although this may be indirect via metabolic changes. Connects BCAAs and TCA-cycle metabolism governing TCA-cycle flux to activate TORC1 signaling. High copy suppressor of a temperature-sensitive mutation in the ABC transporter, ATM1. The polypeptide is Branched-chain-amino-acid aminotransferase, mitochondrial (Saccharomyces cerevisiae (strain ATCC 204508 / S288c) (Baker's yeast)).